Consider the following 457-residue polypeptide: Cysteine--tRNA ligase (457 aa).

Cysteine 28 serves as a coordination point for Zn(2+). The short motif at 30-40 (PTVYDTAHIGN) is the 'HIGH' region element. Residues cysteine 212, histidine 237, and glutamate 241 each contribute to the Zn(2+) site. The short motif at 270 to 274 (KMSKS) is the 'KMSKS' region element. Lysine 273 lines the ATP pocket.

The protein belongs to the class-I aminoacyl-tRNA synthetase family. In terms of assembly, monomer. Requires Zn(2+) as cofactor.

Its subcellular location is the cytoplasm. It catalyses the reaction tRNA(Cys) + L-cysteine + ATP = L-cysteinyl-tRNA(Cys) + AMP + diphosphate. The protein is Cysteine--tRNA ligase of Wolbachia sp. subsp. Drosophila simulans (strain wRi).